The following is a 202-amino-acid chain: Remorin 1.4 (202 aa).

Over residues 1–10 the composition is skewed to basic and acidic residues; sequence MAEEEPKKVT. Residues 1-79 form a disordered region; that stretch reads MAEEEPKKVT…VEEEKKEGSV (79 aa). The span at 25-39 shows a compositional bias: low complexity; the sequence is EKPAAAADVAPQEKP. Residues 40–50 are compositionally biased toward pro residues; that stretch reads VAPPPVLPSPA. Residues 68 to 79 are compositionally biased toward basic and acidic residues; sequence KEVEEEKKEGSV. Residues 123 to 169 are a coiled coil; sequence ENNKKAAVEAELKKMEEQLEKKKAEYVEQMKNKIAQIHKEAEEKRAM.

The protein belongs to the remorin family.

The chain is Remorin 1.4 from Arabidopsis thaliana (Mouse-ear cress).